A 193-amino-acid chain; its full sequence is dCTP deaminase (193 aa).

Residues 110-115 (RSSLAR), aspartate 128, 136-138 (VLE), tyrosine 171, lysine 178, and glutamine 182 each bind dCTP. The active-site Proton donor/acceptor is glutamate 138. Residues 171-193 (YNKRKNAKYKDQQDAVASRISQD) form a disordered region.

Belongs to the dCTP deaminase family. In terms of assembly, homotrimer.

It catalyses the reaction dCTP + H2O + H(+) = dUTP + NH4(+). Its pathway is pyrimidine metabolism; dUMP biosynthesis; dUMP from dCTP (dUTP route): step 1/2. Catalyzes the deamination of dCTP to dUTP. This is dCTP deaminase from Shewanella oneidensis (strain ATCC 700550 / JCM 31522 / CIP 106686 / LMG 19005 / NCIMB 14063 / MR-1).